The sequence spans 88 residues: Protein GOLVEN 10 (88 aa).

A signal peptide spans 1 to 22 (MSSIHVASMILLLFLFLHHSDS). The propeptide occupies 23 to 75 (RHLDNVHITASRFSLVKDQNVVSSSTSKEPVKVSRFVPGPLKHHHRRPPLLFA). Residues 44–88 (VSSSTSKEPVKVSRFVPGPLKHHHRRPPLLFADYPKPSTRPPRHN) are disordered. A Sulfotyrosine modification is found at Y77. Residue P85 is modified to Hydroxyproline.

Belongs to the RGF family. Binds to LRR receptor-like serine/threonine-protein kinases RGI1, RGI2 and RGI3 to trigger their dimerization with SERK proteins and subsequent signaling. In terms of tissue distribution, expressed in roots, shoots, leaves and flowers.

The protein localises to the secreted. Its subcellular location is the endoplasmic reticulum. Functionally, signaling peptide (root growth factor) that maintains the postembryonic root stem cell niche. Regulates the pattern of root growth and lateral root development by modulating the length and the number of cortical cells in the root apical meristem (RAM), and the anticlinal asymmetric cell divisions in lateral root initiation cells. This Arabidopsis thaliana (Mouse-ear cress) protein is Protein GOLVEN 10.